The sequence spans 101 residues: Large ribosomal subunit protein eL43 (101 aa).

A C4-type zinc finger spans residues 40–62 (CPSCRSLVRLQRIAFGIWKCPKC).

This sequence belongs to the eukaryotic ribosomal protein eL43 family. The cofactor is Zn(2+).

In Pyrobaculum neutrophilum (strain DSM 2338 / JCM 9278 / NBRC 100436 / V24Sta) (Thermoproteus neutrophilus), this protein is Large ribosomal subunit protein eL43.